We begin with the raw amino-acid sequence, 426 residues long: Dihydroorotase (426 aa).

His-58 and His-60 together coordinate Zn(2+). Substrate contacts are provided by residues His-60–Arg-62 and Asn-92. Residues Asp-150, His-177, and His-230 each contribute to the Zn(2+) site. Residue Asn-276 participates in substrate binding. Position 303 (Asp-303) interacts with Zn(2+). Residue Asp-303 is part of the active site. Residues His-307 and Phe-321–Gly-322 contribute to the substrate site.

It belongs to the metallo-dependent hydrolases superfamily. DHOase family. Class I DHOase subfamily. It depends on Zn(2+) as a cofactor.

It carries out the reaction (S)-dihydroorotate + H2O = N-carbamoyl-L-aspartate + H(+). It participates in pyrimidine metabolism; UMP biosynthesis via de novo pathway; (S)-dihydroorotate from bicarbonate: step 3/3. Functionally, catalyzes the reversible cyclization of carbamoyl aspartate to dihydroorotate. In Listeria monocytogenes serotype 4b (strain CLIP80459), this protein is Dihydroorotase.